Consider the following 201-residue polypeptide: Recombination protein RecR (201 aa).

The C4-type zinc finger occupies 57–72; it reads CCDCRTFTEEERCTIC. In terms of domain architecture, Toprim spans 81–176; sequence GQICVVESPA…AASRIAHGVP (96 aa).

It belongs to the RecR family.

May play a role in DNA repair. It seems to be involved in an RecBC-independent recombinational process of DNA repair. It may act with RecF and RecO. This is Recombination protein RecR from Proteus mirabilis (strain HI4320).